The chain runs to 416 residues: MGLERVVVIGLGVSGRSIAHFLAQKGVCVLGVDKSLHALQNCPYIQEKYLENEEFPSQVDYVVRSPGVSKEHPWVQAAIASHIPVMADIQLAFQTEKFTERESLAITGTTGKTTTILFLEYLFKRSGIPAFAMGNVGIPILDGMQNPGVRIVEISSFQLADQEKSYPVLSGGMILNISDNHLDYHGNFSEYFQAKQNLALCMRNPDDLWVGDERFYGHLYLEEVQKYMRLLDKESALKPLYLHDKYNYCCAYLLAKTEFPISETSFIEAVATFNKPPHRMEYLGQKQGIHYINDSKATTVSATETALLGVGNQAIVILGGRNKGCTFSSLLPALRKAAKSVVAMGECAQEIARDLEEFPVTVVKNLSEALLCAEEQAVPGDVIVLSPACASFDQFRSYEERGAMFKQLVGMEEVLL.

Position 108–114 (108–114 (GTTGKTT)) interacts with ATP.

It belongs to the MurCDEF family.

It localises to the cytoplasm. The catalysed reaction is UDP-N-acetyl-alpha-D-muramoyl-L-alanine + D-glutamate + ATP = UDP-N-acetyl-alpha-D-muramoyl-L-alanyl-D-glutamate + ADP + phosphate + H(+). It participates in cell wall biogenesis; peptidoglycan biosynthesis. Its function is as follows. Cell wall formation. Catalyzes the addition of glutamate to the nucleotide precursor UDP-N-acetylmuramoyl-L-alanine (UMA). The chain is UDP-N-acetylmuramoylalanine--D-glutamate ligase from Chlamydia trachomatis serovar A (strain ATCC VR-571B / DSM 19440 / HAR-13).